A 491-amino-acid polypeptide reads, in one-letter code: Nucleotidyltransferase MB21D2 (491 aa).

Positions 431-442 (RGSTTSIPSPQS) are enriched in polar residues. Residues 431–452 (RGSTTSIPSPQSDGGDPNQPDD) are disordered. Thr-435 carries the phosphothreonine modification. Phosphoserine is present on residues Ser-436, Ser-439, and Ser-442.

It belongs to the mab-21 family.

Functionally, probable nucleotidyltransferase that catalyzes the formation of cyclic dinucleotide second messenger in response to some unknown stimulus. The chain is Nucleotidyltransferase MB21D2 from Homo sapiens (Human).